The chain runs to 258 residues: tRNA pseudouridine synthase A (258 aa).

The Nucleophile role is filled by aspartate 52. Tyrosine 111 is a substrate binding site.

This sequence belongs to the tRNA pseudouridine synthase TruA family. As to quaternary structure, homodimer.

The catalysed reaction is uridine(38/39/40) in tRNA = pseudouridine(38/39/40) in tRNA. In terms of biological role, formation of pseudouridine at positions 38, 39 and 40 in the anticodon stem and loop of transfer RNAs. This Azorhizobium caulinodans (strain ATCC 43989 / DSM 5975 / JCM 20966 / LMG 6465 / NBRC 14845 / NCIMB 13405 / ORS 571) protein is tRNA pseudouridine synthase A.